A 189-amino-acid chain; its full sequence is Chitin synthase 1 (189 aa).

Belongs to the chitin synthase family. Class I subfamily.

The protein localises to the cell membrane. The catalysed reaction is [(1-&gt;4)-N-acetyl-beta-D-glucosaminyl](n) + UDP-N-acetyl-alpha-D-glucosamine = [(1-&gt;4)-N-acetyl-beta-D-glucosaminyl](n+1) + UDP + H(+). Functionally, polymerizes chitin, a structural polymer of the cell wall and septum, by transferring the sugar moiety of UDP-GlcNAc to the non-reducing end of the growing chitin polymer. This is Chitin synthase 1 (chs1) from Aspergillus niger.